The following is a 651-amino-acid chain: Acetyl-coenzyme A synthetase (651 aa).

CoA is bound by residues 190-193 (RGGK), Thr312, and Asn336. ATP contacts are provided by residues 388-390 (GEP), 412-417 (DTWWQT), Asp501, and Arg516. Ser524 contributes to the CoA binding site. Residue Arg527 participates in ATP binding. 3 residues coordinate Mg(2+): Val538, His540, and Val543. Arg585 is a binding site for CoA. Lys610 is modified (N6-acetyllysine).

Belongs to the ATP-dependent AMP-binding enzyme family. The cofactor is Mg(2+). In terms of processing, acetylated. Deacetylation by the SIR2-homolog deacetylase activates the enzyme.

The catalysed reaction is acetate + ATP + CoA = acetyl-CoA + AMP + diphosphate. Catalyzes the conversion of acetate into acetyl-CoA (AcCoA), an essential intermediate at the junction of anabolic and catabolic pathways. AcsA undergoes a two-step reaction. In the first half reaction, AcsA combines acetate with ATP to form acetyl-adenylate (AcAMP) intermediate. In the second half reaction, it can then transfer the acetyl group from AcAMP to the sulfhydryl group of CoA, forming the product AcCoA. The protein is Acetyl-coenzyme A synthetase of Mesorhizobium japonicum (strain LMG 29417 / CECT 9101 / MAFF 303099) (Mesorhizobium loti (strain MAFF 303099)).